Reading from the N-terminus, the 387-residue chain is 3-ketoacyl-CoA thiolase (387 aa).

C91 (acyl-thioester intermediate) is an active-site residue. Catalysis depends on proton acceptor residues H343 and C373.

The protein belongs to the thiolase-like superfamily. Thiolase family. In terms of assembly, heterotetramer of two alpha chains (FadB) and two beta chains (FadA).

The protein resides in the cytoplasm. It carries out the reaction an acyl-CoA + acetyl-CoA = a 3-oxoacyl-CoA + CoA. Its pathway is lipid metabolism; fatty acid beta-oxidation. Functionally, catalyzes the final step of fatty acid oxidation in which acetyl-CoA is released and the CoA ester of a fatty acid two carbons shorter is formed. The sequence is that of 3-ketoacyl-CoA thiolase from Vibrio cholerae serotype O1 (strain ATCC 39541 / Classical Ogawa 395 / O395).